The primary structure comprises 874 residues: Alanine--tRNA ligase (874 aa).

Residues His-564, His-568, Cys-665, and His-669 each contribute to the Zn(2+) site.

It belongs to the class-II aminoacyl-tRNA synthetase family. Zn(2+) is required as a cofactor.

Its subcellular location is the cytoplasm. The catalysed reaction is tRNA(Ala) + L-alanine + ATP = L-alanyl-tRNA(Ala) + AMP + diphosphate. Functionally, catalyzes the attachment of alanine to tRNA(Ala) in a two-step reaction: alanine is first activated by ATP to form Ala-AMP and then transferred to the acceptor end of tRNA(Ala). Also edits incorrectly charged Ser-tRNA(Ala) and Gly-tRNA(Ala) via its editing domain. In Paraburkholderia phymatum (strain DSM 17167 / CIP 108236 / LMG 21445 / STM815) (Burkholderia phymatum), this protein is Alanine--tRNA ligase.